A 251-amino-acid chain; its full sequence is Ubiquinone/menaquinone biosynthesis C-methyltransferase UbiE (251 aa).

Residues Thr-74, Asp-95, 123–124 (NA), and Ser-140 each bind S-adenosyl-L-methionine.

This sequence belongs to the class I-like SAM-binding methyltransferase superfamily. MenG/UbiE family.

The catalysed reaction is a 2-demethylmenaquinol + S-adenosyl-L-methionine = a menaquinol + S-adenosyl-L-homocysteine + H(+). The enzyme catalyses a 2-methoxy-6-(all-trans-polyprenyl)benzene-1,4-diol + S-adenosyl-L-methionine = a 5-methoxy-2-methyl-3-(all-trans-polyprenyl)benzene-1,4-diol + S-adenosyl-L-homocysteine + H(+). It participates in quinol/quinone metabolism; menaquinone biosynthesis; menaquinol from 1,4-dihydroxy-2-naphthoate: step 2/2. Its pathway is cofactor biosynthesis; ubiquinone biosynthesis. Its function is as follows. Methyltransferase required for the conversion of demethylmenaquinol (DMKH2) to menaquinol (MKH2) and the conversion of 2-polyprenyl-6-methoxy-1,4-benzoquinol (DDMQH2) to 2-polyprenyl-3-methyl-6-methoxy-1,4-benzoquinol (DMQH2). The sequence is that of Ubiquinone/menaquinone biosynthesis C-methyltransferase UbiE from Escherichia fergusonii (strain ATCC 35469 / DSM 13698 / CCUG 18766 / IAM 14443 / JCM 21226 / LMG 7866 / NBRC 102419 / NCTC 12128 / CDC 0568-73).